We begin with the raw amino-acid sequence, 156 residues long: Large ribosomal subunit protein uL15 (156 aa).

The segment at 14–35 (GSRTHGWGRVGQHRKSGSSGGK) is disordered.

It belongs to the universal ribosomal protein uL15 family. In terms of assembly, part of the 50S ribosomal subunit.

Binds to the 23S rRNA. This is Large ribosomal subunit protein uL15 from Pyrobaculum islandicum (strain DSM 4184 / JCM 9189 / GEO3).